The chain runs to 225 residues: UPF0758 protein BCG9842_B0662 (225 aa).

One can recognise an MPN domain in the interval 103 to 225; it reads SIRSPEDCAK…FVSLKEKGHI (123 aa). Residues histidine 174, histidine 176, and aspartate 187 each coordinate Zn(2+). Positions 174 to 187 match the JAMM motif motif; the sequence is HNHPSGDPTPSRED.

It belongs to the UPF0758 family.

This chain is UPF0758 protein BCG9842_B0662, found in Bacillus cereus (strain G9842).